Reading from the N-terminus, the 109-residue chain is Phosphoribosyl-ATP pyrophosphatase (109 aa).

Belongs to the PRA-PH family.

It localises to the cytoplasm. The catalysed reaction is 1-(5-phospho-beta-D-ribosyl)-ATP + H2O = 1-(5-phospho-beta-D-ribosyl)-5'-AMP + diphosphate + H(+). Its pathway is amino-acid biosynthesis; L-histidine biosynthesis; L-histidine from 5-phospho-alpha-D-ribose 1-diphosphate: step 2/9. This is Phosphoribosyl-ATP pyrophosphatase from Alkalilimnicola ehrlichii (strain ATCC BAA-1101 / DSM 17681 / MLHE-1).